The following is a 183-amino-acid chain: Protein Syd (183 aa).

Belongs to the Syd family.

It is found in the cell inner membrane. Interacts with the SecY protein in vivo. May bind preferentially to an uncomplexed state of SecY, thus functioning either as a chelating agent for excess SecY in the cell or as a regulatory factor that negatively controls the translocase function. The polypeptide is Protein Syd (Yersinia pestis bv. Antiqua (strain Antiqua)).